We begin with the raw amino-acid sequence, 254 residues long: UPF0603 protein YdjH (254 aa).

The first 29 residues, 1–29, serve as a signal peptide directing secretion; the sequence is MRGFFGKAIFVVLAVFIMMPLLGIEAVRA. A helical membrane pass occupies residues 166-186; the sequence is IFFTWWFQLIAAIAVGGIAVS. Residues 223–235 are compositionally biased toward basic and acidic residues; sequence VTRERKPSDKDSG. The segment at 223 to 254 is disordered; the sequence is VTRERKPSDKDSGSDGGVTKGGTSYSGSRGSF. The span at 243–254 shows a compositional bias: polar residues; sequence GGTSYSGSRGSF.

Belongs to the UPF0603 family.

Its subcellular location is the cell membrane. This Bacillus subtilis (strain 168) protein is UPF0603 protein YdjH (ydjH).